The primary structure comprises 654 residues: Tetratricopeptide repeat protein 30 homolog (654 aa).

7 TPR repeats span residues Glu10 to Arg43, Ala44 to Glu76, Ala143 to Asn176, Leu178 to Asn210, Leu384 to Val417, Ala449 to Asp483, and Cys533 to Gly566.

The protein belongs to the TTC30/dfy-1/fleer family.

The protein resides in the cell projection. It localises to the cilium. In terms of biological role, required for polyglutamylation of axonemal tubulin in sensory cilia. Plays a role in anterograde intraflagellar transport (IFT), the process by which cilia precursors are transported from the base of the cilium to the site of their incorporation at the tip. This chain is Tetratricopeptide repeat protein 30 homolog, found in Drosophila pseudoobscura pseudoobscura (Fruit fly).